The chain runs to 416 residues: Phosphoglycerate kinase (416 aa).

Residues 24–26 (DLN), arginine 40, 63–66 (HLGR), arginine 126, and arginine 166 each bind substrate. ATP-binding positions include lysine 216, glycine 304, glutamate 335, and 364–367 (GGDS).

This sequence belongs to the phosphoglycerate kinase family. Monomer.

The protein localises to the cytoplasm. It carries out the reaction (2R)-3-phosphoglycerate + ATP = (2R)-3-phospho-glyceroyl phosphate + ADP. Its pathway is carbohydrate degradation; glycolysis; pyruvate from D-glyceraldehyde 3-phosphate: step 2/5. The sequence is that of Phosphoglycerate kinase from Mycobacterium leprae (strain Br4923).